Reading from the N-terminus, the 305-residue chain is Ribonuclease BN (305 aa).

His-63, His-65, Asp-67, His-68, His-141, Asp-212, and His-270 together coordinate Zn(2+). The Proton acceptor role is filled by Asp-67.

Belongs to the RNase Z family. RNase BN subfamily. Homodimer. The cofactor is Zn(2+).

Zinc phosphodiesterase, which has both exoribonuclease and endoribonuclease activities. The sequence is that of Ribonuclease BN from Proteus mirabilis (strain HI4320).